A 751-amino-acid polypeptide reads, in one-letter code: Photosystem I P700 chlorophyll a apoprotein A1 (751 aa).

The next 8 membrane-spanning stretches (helical) occupy residues 71–94 (VFSA…FHGA), 157–180 (LYCT…FHYH), 196–220 (LNHH…HVSL), 292–310 (TAHH…GHMY), 347–370 (WHAQ…HHMY), 386–412 (LSLF…IFLV), 434–456 (AIIS…LYIH), and 532–550 (FLVH…LILL). Positions 574 and 583 each coordinate [4Fe-4S] cluster. A run of 2 helical transmembrane segments spans residues 590–611 (HVFL…HFSW) and 665–687 (LSAY…MFLF). Residue H676 participates in chlorophyll a' binding. The chlorophyll a site is built by M684 and Y692. W693 serves as a coordination point for phylloquinone. A helical transmembrane segment spans residues 725–745 (AVGVAHYLLGGIVTTWAFFLA).

Belongs to the PsaA/PsaB family. In terms of assembly, the PsaA/B heterodimer binds the P700 chlorophyll special pair and subsequent electron acceptors. PSI consists of a core antenna complex that captures photons, and an electron transfer chain that converts photonic excitation into a charge separation. The eukaryotic PSI reaction center is composed of at least 11 subunits. P700 is a chlorophyll a/chlorophyll a' dimer, A0 is one or more chlorophyll a, A1 is one or both phylloquinones and FX is a shared 4Fe-4S iron-sulfur center. is required as a cofactor.

The protein localises to the plastid. It is found in the chloroplast thylakoid membrane. The catalysed reaction is reduced [plastocyanin] + hnu + oxidized [2Fe-2S]-[ferredoxin] = oxidized [plastocyanin] + reduced [2Fe-2S]-[ferredoxin]. Its function is as follows. PsaA and PsaB bind P700, the primary electron donor of photosystem I (PSI), as well as the electron acceptors A0, A1 and FX. PSI is a plastocyanin-ferredoxin oxidoreductase, converting photonic excitation into a charge separation, which transfers an electron from the donor P700 chlorophyll pair to the spectroscopically characterized acceptors A0, A1, FX, FA and FB in turn. Oxidized P700 is reduced on the lumenal side of the thylakoid membrane by plastocyanin. The polypeptide is Photosystem I P700 chlorophyll a apoprotein A1 (Welwitschia mirabilis (Tree tumbo)).